The following is a 223-amino-acid chain: Uracil-DNA glycosylase (223 aa).

Aspartate 61 serves as the catalytic Proton acceptor.

This sequence belongs to the uracil-DNA glycosylase (UDG) superfamily. UNG family.

It localises to the cytoplasm. It catalyses the reaction Hydrolyzes single-stranded DNA or mismatched double-stranded DNA and polynucleotides, releasing free uracil.. Functionally, excises uracil residues from the DNA which can arise as a result of misincorporation of dUMP residues by DNA polymerase or due to deamination of cytosine. This Tolumonas auensis (strain DSM 9187 / NBRC 110442 / TA 4) protein is Uracil-DNA glycosylase.